Consider the following 375-residue polypeptide: Carbamoyl phosphate synthase small chain (375 aa).

The segment at 1 to 186 (MKAILALEDG…IVDGTYAWPG (186 aa)) is CPSase. L-glutamine-binding residues include Ser45, Gly238, and Gly240. Residues 190-375 (RLVVFDMGIK…RNLVRKETGK (186 aa)) enclose the Glutamine amidotransferase type-1 domain. The active-site Nucleophile is Cys265. Residues Leu266, Gln269, Asn307, Gly309, and Phe310 each coordinate L-glutamine. Catalysis depends on residues His348 and Glu350.

This sequence belongs to the CarA family. Composed of two chains; the small (or glutamine) chain promotes the hydrolysis of glutamine to ammonia, which is used by the large (or ammonia) chain to synthesize carbamoyl phosphate. Tetramer of heterodimers (alpha,beta)4.

It catalyses the reaction hydrogencarbonate + L-glutamine + 2 ATP + H2O = carbamoyl phosphate + L-glutamate + 2 ADP + phosphate + 2 H(+). The enzyme catalyses L-glutamine + H2O = L-glutamate + NH4(+). Its pathway is amino-acid biosynthesis; L-arginine biosynthesis; carbamoyl phosphate from bicarbonate: step 1/1. The protein operates within pyrimidine metabolism; UMP biosynthesis via de novo pathway; (S)-dihydroorotate from bicarbonate: step 1/3. In terms of biological role, small subunit of the glutamine-dependent carbamoyl phosphate synthetase (CPSase). CPSase catalyzes the formation of carbamoyl phosphate from the ammonia moiety of glutamine, carbonate, and phosphate donated by ATP, constituting the first step of 2 biosynthetic pathways, one leading to arginine and/or urea and the other to pyrimidine nucleotides. The small subunit (glutamine amidotransferase) binds and cleaves glutamine to supply the large subunit with the substrate ammonia. This Solidesulfovibrio magneticus (strain ATCC 700980 / DSM 13731 / RS-1) (Desulfovibrio magneticus) protein is Carbamoyl phosphate synthase small chain.